The primary structure comprises 1088 residues: PAN2-PAN3 deadenylation complex catalytic subunit pan2 (1088 aa).

4 WD repeats span residues 16–56 (VSTC…YTQF), 136–175 (HKDKNVSDIFIMRRNRLLCCGSTNGEIILRDPNSFQPVNK), 178–224 (AHTG…SLVP), and 270–309 (PLTSYLTGMDIASTGDAMVFTDVEDNIHLWSPLENPSFSD). Residues 309 to 443 (DLKLPIQLPN…EDTISGPDSI (135 aa)) form a linker region. In terms of domain architecture, USP spans 443–814 (IPKFYQRPVI…IPIIVYYEKL (372 aa)). Positions 860-1033 (VGIDSEFVAL…EDALTALKLY (174 aa)) constitute an Exonuclease domain. Residues Asp863, Glu865, Asp972, and Asp1025 each coordinate a divalent metal cation.

The protein belongs to the peptidase C19 family. PAN2 subfamily. In terms of assembly, forms a heterotrimer with an asymmetric homodimer of the regulatory subunit ppk26/pan3 to form the poly(A)-nuclease (PAN) deadenylation complex. The cofactor is a divalent metal cation.

Its subcellular location is the cytoplasm. The enzyme catalyses Exonucleolytic cleavage of poly(A) to 5'-AMP.. With respect to regulation, positively regulated by the regulatory subunit ppk26/pan3. In terms of biological role, catalytic subunit of the poly(A)-nuclease (PAN) deadenylation complex, one of two cytoplasmic mRNA deadenylases involved in mRNA turnover. PAN specifically shortens poly(A) tails of RNA and the activity is stimulated by poly(A)-binding protein pab1. PAN deadenylation is followed by rapid degradation of the shortened mRNA tails by the CCR4-NOT complex. Deadenylated mRNAs are then degraded by two alternative mechanisms, namely exosome-mediated 3'-5' exonucleolytic degradation, or deadenylation-dependent mRNA decaping and subsequent 5'-3' exonucleolytic degradation by xrn1. May also be involved in post-transcriptional maturation of mRNA poly(A) tails. The protein is PAN2-PAN3 deadenylation complex catalytic subunit pan2 of Schizosaccharomyces pombe (strain 972 / ATCC 24843) (Fission yeast).